The chain runs to 244 residues: 7-cyano-7-deazaguanine synthase (244 aa).

Phe-14 to Val-24 is a binding site for ATP. 4 residues coordinate Zn(2+): Cys-202, Cys-217, Cys-220, and Cys-223.

Belongs to the QueC family. It depends on Zn(2+) as a cofactor.

The enzyme catalyses 7-carboxy-7-deazaguanine + NH4(+) + ATP = 7-cyano-7-deazaguanine + ADP + phosphate + H2O + H(+). It participates in purine metabolism; 7-cyano-7-deazaguanine biosynthesis. Catalyzes the ATP-dependent conversion of 7-carboxy-7-deazaguanine (CDG) to 7-cyano-7-deazaguanine (preQ(0)). This is 7-cyano-7-deazaguanine synthase from Burkholderia thailandensis (strain ATCC 700388 / DSM 13276 / CCUG 48851 / CIP 106301 / E264).